Here is a 238-residue protein sequence, read N- to C-terminus: Purine nucleoside phosphorylase DeoD-type (238 aa).

Position 5 (histidine 5) interacts with a purine D-ribonucleoside. Phosphate is bound by residues glycine 21, arginine 25, arginine 44, and 88-91 (RVGS). Residues 180–182 (EME) and 204–205 (SD) each bind a purine D-ribonucleoside. Aspartate 205 acts as the Proton donor in catalysis.

It belongs to the PNP/UDP phosphorylase family. In terms of assembly, homohexamer; trimer of homodimers.

The enzyme catalyses a purine D-ribonucleoside + phosphate = a purine nucleobase + alpha-D-ribose 1-phosphate. It carries out the reaction a purine 2'-deoxy-D-ribonucleoside + phosphate = a purine nucleobase + 2-deoxy-alpha-D-ribose 1-phosphate. In terms of biological role, catalyzes the reversible phosphorolytic breakdown of the N-glycosidic bond in the beta-(deoxy)ribonucleoside molecules, with the formation of the corresponding free purine bases and pentose-1-phosphate. The sequence is that of Purine nucleoside phosphorylase DeoD-type from Proteus mirabilis (strain HI4320).